A 196-amino-acid polypeptide reads, in one-letter code: ATP-dependent Clp protease proteolytic subunit (196 aa).

The active-site Nucleophile is serine 101. Histidine 126 is an active-site residue.

The protein belongs to the peptidase S14 family. Component of the chloroplastic Clp protease core complex.

The protein localises to the plastid. It localises to the chloroplast stroma. It catalyses the reaction Hydrolysis of proteins to small peptides in the presence of ATP and magnesium. alpha-casein is the usual test substrate. In the absence of ATP, only oligopeptides shorter than five residues are hydrolyzed (such as succinyl-Leu-Tyr-|-NHMec, and Leu-Tyr-Leu-|-Tyr-Trp, in which cleavage of the -Tyr-|-Leu- and -Tyr-|-Trp bonds also occurs).. Cleaves peptides in various proteins in a process that requires ATP hydrolysis. Has a chymotrypsin-like activity. Plays a major role in the degradation of misfolded proteins. The sequence is that of ATP-dependent Clp protease proteolytic subunit from Nasturtium officinale (Watercress).